The sequence spans 918 residues: Protein SEY1 homolog (918 aa).

Over 1 to 701 (MESSNHLPNK…AGTSVSSWRN (701 aa)) the chain is Cytoplasmic. The 235-residue stretch at 46-280 (GFKFNVVTIL…VPSDGFFVYS (235 aa)) folds into the GB1/RHD3-type G domain. 56-63 (GSQSSGKS) serves as a coordination point for GTP. Positions 554 to 626 (SLVLLLKATQ…DALTLLQVLK (73 aa)) form a coiled coil. The chain crosses the membrane as a helical span at residues 702-722 (IPPVFWLVLLVLGWNELRAAF). The Lumenal segment spans residues 723 to 725 (RVL). A helical membrane pass occupies residues 726–746 (LKFYILIPLLIVSYFTFSYSA). At 747–918 (NKLLGPKANE…CGKAVHLAQW (172 aa)) the chain is on the cytoplasmic side.

Belongs to the TRAFAC class dynamin-like GTPase superfamily. GB1/RHD3 GTPase family. RHD3 subfamily.

The protein localises to the endoplasmic reticulum membrane. Probable GTP-binding protein that may be involved in cell development. This chain is Protein SEY1 homolog, found in Theileria annulata.